Here is a 429-residue protein sequence, read N- to C-terminus: Glycine betaine monooxygenase oxygenase subunit (429 aa).

Residues 56-163 (WLIAGMTCEI…VKTAGGYIFI (108 aa)) enclose the Rieske domain. Residues Cys-98, His-100, Cys-118, and His-121 each contribute to the [2Fe-2S] cluster site. Residues His-217 and His-222 each contribute to the Fe cation site.

The protein belongs to the bacterial ring-hydroxylating dioxygenase alpha subunit family. The system is composed of an oxygenase subunit (GbcA) and a reductase subunit (GbcB). Requires [2Fe-2S] cluster as cofactor. Fe cation is required as a cofactor.

It catalyses the reaction glycine betaine + NADH + O2 + H(+) = N,N-dimethylglycine + formaldehyde + NAD(+) + H2O. Functionally, involved in degradation of glycine betaine. Part of a Rieske-type oxygenase system that catalyzes the conversion of glycine betaine (GB) to dimethylglycine (DMG). This subunit is the terminal oxygenase component of the system. Required for growth on choline and GB, but not for growth on DMG. This chain is Glycine betaine monooxygenase oxygenase subunit, found in Pseudomonas aeruginosa (strain ATCC 15692 / DSM 22644 / CIP 104116 / JCM 14847 / LMG 12228 / 1C / PRS 101 / PAO1).